We begin with the raw amino-acid sequence, 650 residues long: Fructose-1,6-bisphosphatase class 3 (650 aa).

This sequence belongs to the FBPase class 3 family. Requires Mn(2+) as cofactor.

It carries out the reaction beta-D-fructose 1,6-bisphosphate + H2O = beta-D-fructose 6-phosphate + phosphate. Its pathway is carbohydrate biosynthesis; gluconeogenesis. This is Fructose-1,6-bisphosphatase class 3 from Finegoldia magna (strain ATCC 29328 / DSM 20472 / WAL 2508) (Peptostreptococcus magnus).